The sequence spans 213 residues: Orotate phosphoribosyltransferase (213 aa).

Residue Lys26 participates in 5-phospho-alpha-D-ribose 1-diphosphate binding. 34–35 (FF) provides a ligand contact to orotate. 5-phospho-alpha-D-ribose 1-diphosphate-binding positions include 72–73 (YK), Arg99, Lys100, Lys103, His105, and 124–132 (DDVITAGTA). Thr128 and Arg156 together coordinate orotate.

It belongs to the purine/pyrimidine phosphoribosyltransferase family. PyrE subfamily. In terms of assembly, homodimer. Requires Mg(2+) as cofactor.

It carries out the reaction orotidine 5'-phosphate + diphosphate = orotate + 5-phospho-alpha-D-ribose 1-diphosphate. The protein operates within pyrimidine metabolism; UMP biosynthesis via de novo pathway; UMP from orotate: step 1/2. Its function is as follows. Catalyzes the transfer of a ribosyl phosphate group from 5-phosphoribose 1-diphosphate to orotate, leading to the formation of orotidine monophosphate (OMP). The polypeptide is Orotate phosphoribosyltransferase (Klebsiella pneumoniae subsp. pneumoniae (strain ATCC 700721 / MGH 78578)).